We begin with the raw amino-acid sequence, 318 residues long: MELLSPPLRDTDLLGPDGSLCSFATRDDFYDDPCFDSPDLRFFEDLDPRLVHVGALLKPEEHAHFPTTVHPGPGAREDEHVRAPSGHHQAGRCLLWACKACKRKTTNADRRKAATMRERRRLSKVNEAFETLKRCTSSNPNQRLPKVEILRNAIRYIEGLQALLRDQDAAPPGAAAFYAPGPLPPGRGSEHYSGDSDASSPRSNCSDGMMDYSGPPSGPRRQNGYDAAYYSEASSEPRPGKSAAVSSLDCLSSIVERISTDSPAAPSLLLPDAPPESPPGPPEETSSSDAEQGTQTPSPDSTPQCPAGSKPNPIYQVL.

A Peptide (Met-Gly) (interchain with G-Cter in ubiquitin) cross-link involves residue M1. At K104 the chain carries N6-methyllysine; by EHMT2. One can recognise a bHLH domain in the interval D109 to L160. Disordered regions lie at residues A175–G224 and S262–L318. Polar residues predominate over residues S196–S206. The segment covering S262–P271 has biased composition (low complexity). Over residues D272 to P282 the composition is skewed to pro residues. Positions A290 to Q304 are enriched in polar residues.

As to quaternary structure, efficient DNA binding requires dimerization with another bHLH protein. Seems to form active heterodimers with ITF-2. Interacts with SUV39H1. Interacts with DDX5. Interacts with CHD2. Interacts with TSC22D3. Interacts with SETD3. Interacts with P-TEFB complex; promotes the transcriptional activity of MYOD1 through its CDK9-mediated phosphorylation. Interacts with CSRP3. Interacts with NUPR1. Post-translationally, phosphorylated by CDK9. This phosphorylation promotes its function in muscle differentiation. Acetylated by a complex containing EP300 and PCAF. The acetylation is essential to activate target genes. Conversely, its deacetylation by SIRT1 inhibits its function. In terms of processing, ubiquitinated on the N-terminus; which is required for proteasomal degradation. Post-translationally, methylation at Lys-104 by EHMT2/G9a inhibits myogenic activity.

It localises to the nucleus. In terms of biological role, acts as a transcriptional activator that promotes transcription of muscle-specific target genes and plays a role in muscle differentiation. Together with MYF5 and MYOG, co-occupies muscle-specific gene promoter core region during myogenesis. Induces fibroblasts to differentiate into myoblasts. Interacts with and is inhibited by the twist protein. This interaction probably involves the basic domains of both proteins. This Rattus norvegicus (Rat) protein is Myoblast determination protein 1 (Myod1).